The primary structure comprises 211 residues: MSVGILGTKLGMTQIFDEAGVAIPVTVVQVGPCVVTQVKSKQTDGYAAIQVGYGEVKPKALNRPLLGHLAKSSAPALRHLKEYHTDSSSDYALGQEIKADIFSAGELVDVIGTSIGRGFAGNQKRNNFGRGPMSHGSKNHRAPGSIGAGTTPGRVYPGKRMAGRLGGTRVTIRKLTVIRVDAERNLLLIKGAVPGKPGSLLSIVPAKKVGK.

Residues asparagine 122–proline 157 form a disordered region.

The protein belongs to the universal ribosomal protein uL3 family. In terms of assembly, part of the 50S ribosomal subunit. Forms a cluster with proteins L14 and L19.

One of the primary rRNA binding proteins, it binds directly near the 3'-end of the 23S rRNA, where it nucleates assembly of the 50S subunit. The polypeptide is Large ribosomal subunit protein uL3 (Trichormus variabilis (strain ATCC 29413 / PCC 7937) (Anabaena variabilis)).